A 367-amino-acid chain; its full sequence is uncharacterized protein (367 aa).

A helical transmembrane segment spans residues 8–28 (VLIGTFVLAAILAVFGFIYWL).

The protein localises to the membrane. This is an uncharacterized protein from Bradyrhizobium diazoefficiens (strain JCM 10833 / BCRC 13528 / IAM 13628 / NBRC 14792 / USDA 110).